The following is a 331-amino-acid chain: Centriolar satellite-associated tubulin polyglutamylase complex regulator 1 (331 aa).

A required for interaction with PCM1 region spans residues 1–111; the sequence is MLSPERLALP…HCLLQLLCPD (111 aa). Positions 1-225 are required for interaction with TPGS1, LRRC49, and TTLL1; that stretch reads MLSPERLALP…SCPPPALVKE (225 aa). Residues 112–331 form a required for interaction with TPGS2 region; that stretch reads FPLELTQKAA…STEETDESET (220 aa). The interval 288–331 is disordered; the sequence is SPEASCLPSRTPPRVGSPWRPLHHSRKVDGESDGSTEETDESET. Positions 318-331 are enriched in acidic residues; it reads ESDGSTEETDESET. Ser319 is modified (phosphoserine).

Belongs to the CSTPP1 family. As to quaternary structure, interacts with PCM1. Interacts with TTLL1, TPGS1, TPGS2 and LRRC49; the interactions link CSTPP1 to the complex TPGC. Binds to alpha-tubulin.

The protein localises to the cytoplasm. It localises to the cytoskeleton. It is found in the microtubule organizing center. Its subcellular location is the centrosome. The protein resides in the centriolar satellite. Its function is as follows. Regulator of the tubulin polyglutamylase complex (TPGC) that controls cytoskeletal organization, nuclear shape, and cilium disassembly by balancing microtubule and actin assembly. Regulates the assembly and stability of the TPGC and thereby modulates polyglutamylation of the microtubule, which antagonizes MAP4 binding. The chain is Centriolar satellite-associated tubulin polyglutamylase complex regulator 1 (CSTPP1) from Pongo abelii (Sumatran orangutan).